A 199-amino-acid polypeptide reads, in one-letter code: dITP/XTP pyrophosphatase (199 aa).

Residue 8 to 13 (SGNAGK) coordinates substrate. The active-site Proton acceptor is D69. Position 69 (D69) interacts with Mg(2+). Substrate-binding positions include S70, 154 to 157 (FGYN), K177, and 182 to 183 (HR).

This sequence belongs to the HAM1 NTPase family. Homodimer. Mg(2+) serves as cofactor.

It carries out the reaction XTP + H2O = XMP + diphosphate + H(+). It catalyses the reaction dITP + H2O = dIMP + diphosphate + H(+). The catalysed reaction is ITP + H2O = IMP + diphosphate + H(+). In terms of biological role, pyrophosphatase that catalyzes the hydrolysis of nucleoside triphosphates to their monophosphate derivatives, with a high preference for the non-canonical purine nucleotides XTP (xanthosine triphosphate), dITP (deoxyinosine triphosphate) and ITP. Seems to function as a house-cleaning enzyme that removes non-canonical purine nucleotides from the nucleotide pool, thus preventing their incorporation into DNA/RNA and avoiding chromosomal lesions. This is dITP/XTP pyrophosphatase from Xylella fastidiosa (strain Temecula1 / ATCC 700964).